Consider the following 437-residue polypeptide: Type II methyltransferase M.HgiCII (437 aa).

In terms of domain architecture, SAM-dependent MTase C5-type spans 4–431; the sequence is FRFIDLFAGI…KALPNDHLFE (428 aa). C75 is a catalytic residue.

This sequence belongs to the class I-like SAM-binding methyltransferase superfamily. C5-methyltransferase family.

The enzyme catalyses a 2'-deoxycytidine in DNA + S-adenosyl-L-methionine = a 5-methyl-2'-deoxycytidine in DNA + S-adenosyl-L-homocysteine + H(+). In terms of biological role, a methylase that recognizes the double-stranded sequence 5'-GGWCC-3', methylates C-? on both strands and protects the DNA from cleavage by the HgiCII endonuclease. This chain is Type II methyltransferase M.HgiCII, found in Herpetosiphon aurantiacus (Herpetosiphon giganteus).